Consider the following 837-residue polypeptide: Translation initiation factor IF-2 (837 aa).

Positions 94 to 252 are disordered; it reads QRSPEEIEAE…NAHGFQSPTG (159 aa). Basic and acidic residues predominate over residues 96–136; sequence SPEEIEAERKRELDERRAVENAARQKAEEEARVRAEEEARR. Over residues 137–171 the composition is skewed to low complexity; the sequence is QPAAPSAPAEAVAAPAPVAEPVREAAPVVAAAPAA. Basic and acidic residues-rich tracts occupy residues 172–213 and 221–230; these read DTRK…EKAP and TTDEESDGFR. Basic residues predominate over residues 231-244; sequence RGGRGKAKLKKRNA. The 170-residue stretch at 337–506 folds into the tr-type G domain; sequence PRAPVVTVMG…LLQAEVLELT (170 aa). Residues 346–353 are G1; the sequence is GHVDHGKT. 346 to 353 is a GTP binding site; that stretch reads GHVDHGKT. Residues 371-375 form a G2 region; the sequence is GITQH. The tract at residues 392-395 is G3; the sequence is DTPG. GTP contacts are provided by residues 392–396 and 446–449; these read DTPGH and NKID. Residues 446-449 form a G4 region; it reads NKID. The tract at residues 482 to 484 is G5; it reads SAK.

Belongs to the TRAFAC class translation factor GTPase superfamily. Classic translation factor GTPase family. IF-2 subfamily.

The protein resides in the cytoplasm. One of the essential components for the initiation of protein synthesis. Protects formylmethionyl-tRNA from spontaneous hydrolysis and promotes its binding to the 30S ribosomal subunits. Also involved in the hydrolysis of GTP during the formation of the 70S ribosomal complex. This is Translation initiation factor IF-2 from Pseudomonas fluorescens (strain Pf0-1).